Reading from the N-terminus, the 561-residue chain is Lanosterol 14-alpha demethylase (561 aa).

Residue Cys-501 coordinates heme.

The protein belongs to the cytochrome P450 family. It depends on heme as a cofactor.

The protein resides in the membrane. The enzyme catalyses a 14alpha-methyl steroid + 3 reduced [NADPH--hemoprotein reductase] + 3 O2 = a Delta(14) steroid + formate + 3 oxidized [NADPH--hemoprotein reductase] + 4 H2O + 4 H(+). It catalyses the reaction a 14alpha-methyl steroid + reduced [NADPH--hemoprotein reductase] + O2 = a 14alpha-hydroxymethyl steroid + oxidized [NADPH--hemoprotein reductase] + H2O + H(+). It carries out the reaction a 14alpha-hydroxymethyl steroid + reduced [NADPH--hemoprotein reductase] + O2 = a 14alpha-formyl steroid + oxidized [NADPH--hemoprotein reductase] + 2 H2O + H(+). The catalysed reaction is a 14alpha-formyl steroid + reduced [NADPH--hemoprotein reductase] + O2 = a Delta(14) steroid + formate + oxidized [NADPH--hemoprotein reductase] + H2O + 2 H(+). The enzyme catalyses lanosterol + 3 reduced [NADPH--hemoprotein reductase] + 3 O2 = 4,4-dimethyl-5alpha-cholesta-8,14,24-trien-3beta-ol + formate + 3 oxidized [NADPH--hemoprotein reductase] + 4 H2O + 4 H(+). It catalyses the reaction lanosterol + reduced [NADPH--hemoprotein reductase] + O2 = 32-hydroxylanosterol + oxidized [NADPH--hemoprotein reductase] + H2O + H(+). It carries out the reaction 32-hydroxylanosterol + reduced [NADPH--hemoprotein reductase] + O2 = 32-oxolanosterol + oxidized [NADPH--hemoprotein reductase] + 2 H2O + H(+). The catalysed reaction is 32-oxolanosterol + reduced [NADPH--hemoprotein reductase] + O2 = 4,4-dimethyl-5alpha-cholesta-8,14,24-trien-3beta-ol + formate + oxidized [NADPH--hemoprotein reductase] + H2O + 2 H(+). The enzyme catalyses eburicol + 3 reduced [NADPH--hemoprotein reductase] + 3 O2 = 14-demethyleburicol + formate + 3 oxidized [NADPH--hemoprotein reductase] + 4 H2O + 4 H(+). It catalyses the reaction eburicol + reduced [NADPH--hemoprotein reductase] + O2 = 32-hydroxyeburicol + oxidized [NADPH--hemoprotein reductase] + H2O + H(+). It carries out the reaction 32-hydroxyeburicol + reduced [NADPH--hemoprotein reductase] + O2 = 32-oxoeburicol + oxidized [NADPH--hemoprotein reductase] + 2 H2O + H(+). The catalysed reaction is 32-oxoeburicol + reduced [NADPH--hemoprotein reductase] + O2 = 14-demethyleburicol + formate + oxidized [NADPH--hemoprotein reductase] + H2O + 2 H(+). Its pathway is steroid biosynthesis; zymosterol biosynthesis; zymosterol from lanosterol: step 1/6. Its function is as follows. Sterol 14alpha-demethylase that plays a critical role in the third module of ergosterol biosynthesis pathway, being ergosterol the major sterol component in fungal membranes that participates in a variety of functions. The third module or late pathway involves the ergosterol synthesis itself through consecutive reactions that mainly occur in the endoplasmic reticulum (ER) membrane. In filamentous fungi, during the initial step of this module, lanosterol (lanosta-8,24-dien-3beta-ol) can be metabolized to eburicol. Sterol 14alpha-demethylase catalyzes the three-step oxidative removal of the 14alpha-methyl group (C-32) of both these sterols in the form of formate, and converts eburicol and lanosterol to 14-demethyleburicol (4,4,24-trimethylergosta-8,14,24(28)-trienol) and 4,4-dimethyl-5alpha-cholesta-8,14,24-trien-3beta-ol, respectively, which are further metabolized by other enzymes in the pathway to ergosterol. Can also use substrates not intrinsic to fungi, such as 24,25-dihydrolanosterol (DHL), producing 4,4-dimethyl-8,14-cholestadien-3-beta-ol, but at lower rates than the endogenous substrates. The chain is Lanosterol 14-alpha demethylase (ERG11) from Mycosarcoma maydis (Corn smut fungus).